The primary structure comprises 256 residues: Dihydroorotate dehydrogenase B (NAD(+)), electron transfer subunit (256 aa).

The FAD-binding FR-type domain occupies 1-101; it reads MKKAHLTVQS…LGPLGNGFPV (101 aa). FAD contacts are provided by residues 52 to 55, 69 to 71, and 76 to 77; these read RPLS, IYR, and GT. Cysteine 220, cysteine 225, cysteine 228, and cysteine 243 together coordinate [2Fe-2S] cluster.

This sequence belongs to the PyrK family. Heterotetramer of 2 PyrK and 2 PyrD type B subunits. It depends on [2Fe-2S] cluster as a cofactor. FAD is required as a cofactor.

It participates in pyrimidine metabolism; UMP biosynthesis via de novo pathway; orotate from (S)-dihydroorotate (NAD(+) route): step 1/1. Functionally, responsible for channeling the electrons from the oxidation of dihydroorotate from the FMN redox center in the PyrD type B subunit to the ultimate electron acceptor NAD(+). The chain is Dihydroorotate dehydrogenase B (NAD(+)), electron transfer subunit from Bacillus velezensis (strain DSM 23117 / BGSC 10A6 / LMG 26770 / FZB42) (Bacillus amyloliquefaciens subsp. plantarum).